Here is a 268-residue protein sequence, read N- to C-terminus: Probable chemotaxis protein methyltransferase (268 aa).

The region spanning 1 to 262 (MIYSDAGIFL…GITTYRYTTK (262 aa)) is the CheR-type methyltransferase domain. Residues Asn60, Thr62, Arg66, Glu104, Asp130, 188–189 (NL), and 205–206 (RN) each bind S-adenosyl-L-methionine.

The catalysed reaction is L-glutamyl-[protein] + S-adenosyl-L-methionine = [protein]-L-glutamate 5-O-methyl ester + S-adenosyl-L-homocysteine. In terms of biological role, methylation of the membrane-bound methyl-accepting chemotaxis proteins (MCP) to form gamma-glutamyl methyl ester residues in MCP. The chain is Probable chemotaxis protein methyltransferase (cheRch1) from Rhizobium etli (strain ATCC 51251 / DSM 11541 / JCM 21823 / NBRC 15573 / CFN 42).